A 597-amino-acid polypeptide reads, in one-letter code: Miltiradiene synthase KSL2, chloroplastic (597 aa).

The N-terminal 51 residues, 1 to 51 (MSLAFNLRAIPFSGHTIQSRRGLFPVHESPMITTKPFVAVKCSLTTSTDLM), are a transit peptide targeting the chloroplast. Asp329, Asp333, Asn473, and Glu481 together coordinate Mg(2+). Positions 329–333 (DDFFD) match the DDXXD motif motif.

The protein belongs to the terpene synthase family. Mg(2+) serves as cofactor.

The protein localises to the plastid. Its subcellular location is the chloroplast. The enzyme catalyses (+)-copalyl diphosphate = miltiradiene + diphosphate. It functions in the pathway secondary metabolite biosynthesis; terpenoid biosynthesis. Functionally, involved in the biosynthesis of ent-kaurene diterpenoids natural products such as oridonin, miltiradiene, eriocalyxin B and nezukol, known to exhibit antitumor, anti-inflammatory and antibacterial activities. Catalyzes the conversion of (+)-copalyl diphosphate ((+)-CPP) to miltiradiene. The protein is Miltiradiene synthase KSL2, chloroplastic of Isodon japonicus (Scutellaria japonica).